A 411-amino-acid polypeptide reads, in one-letter code: MKTLIINIKELLQVRDNHIDKVSGTEMGVLPKIDDAFLLIEDNLIANFGSMSNCPTIKTDQTIDAKGKIVLPTWCDSHTHIVYAGNRIQEFVDRIKGLSYEEIANRGGGILNSAKNLNQTSEEDIYNQSKVRLEEIMQQGTGAVEIKSGYGLTVDGEIKMLRVIKKLAANYPIKIKATFLGAHAFPSEYKENHADYINLIVNEMLPKIAAEKLADYIDVFLETGYFSVQETEKIIEAGKKYGLIPKIHVNQFTAIGGIKSCVKHEALSVDHLEIVTNEDIENLKGSKTMPVALPSCSYFISIPYTPARKMIAAGLPLALATDYNPGTTPSGNMNFVVATACIKMKMTPEEAINAATINGAYAMGISQTHGSITKGKSANIIITKPLTTYYEMAYSFTSNLIENVFIEGKII.

2 residues coordinate Fe(3+): histidine 78 and histidine 80. Zn(2+) is bound by residues histidine 78 and histidine 80. 4-imidazolone-5-propanoate is bound by residues arginine 87, tyrosine 150, and histidine 183. Tyrosine 150 contacts N-formimidoyl-L-glutamate. Histidine 248 serves as a coordination point for Fe(3+). Histidine 248 serves as a coordination point for Zn(2+). Glutamine 251 is a 4-imidazolone-5-propanoate binding site. Aspartate 322 is a Fe(3+) binding site. Aspartate 322 contacts Zn(2+). N-formimidoyl-L-glutamate is bound by residues asparagine 324 and glycine 326. Threonine 327 serves as a coordination point for 4-imidazolone-5-propanoate.

Belongs to the metallo-dependent hydrolases superfamily. HutI family. Requires Zn(2+) as cofactor. It depends on Fe(3+) as a cofactor.

It is found in the cytoplasm. The enzyme catalyses 4-imidazolone-5-propanoate + H2O = N-formimidoyl-L-glutamate. Its pathway is amino-acid degradation; L-histidine degradation into L-glutamate; N-formimidoyl-L-glutamate from L-histidine: step 3/3. In terms of biological role, catalyzes the hydrolytic cleavage of the carbon-nitrogen bond in imidazolone-5-propanoate to yield N-formimidoyl-L-glutamate. It is the third step in the universal histidine degradation pathway. This chain is Imidazolonepropionase, found in Flavobacterium psychrophilum (strain ATCC 49511 / DSM 21280 / CIP 103535 / JIP02/86).